A 363-amino-acid polypeptide reads, in one-letter code: Histidinol-phosphate aminotransferase (363 aa).

Position 218 is an N6-(pyridoxal phosphate)lysine (K218).

It belongs to the class-II pyridoxal-phosphate-dependent aminotransferase family. Histidinol-phosphate aminotransferase subfamily. In terms of assembly, homodimer. Pyridoxal 5'-phosphate is required as a cofactor.

It catalyses the reaction L-histidinol phosphate + 2-oxoglutarate = 3-(imidazol-4-yl)-2-oxopropyl phosphate + L-glutamate. Its pathway is amino-acid biosynthesis; L-histidine biosynthesis; L-histidine from 5-phospho-alpha-D-ribose 1-diphosphate: step 7/9. The protein is Histidinol-phosphate aminotransferase of Xanthomonas oryzae pv. oryzae (strain MAFF 311018).